Reading from the N-terminus, the 218-residue chain is Large ribosomal subunit protein uL4 (218 aa).

The interval 55 to 83 is disordered; it reads THATKTRGMVSGGGKKPWKQKGTGRARQG.

It belongs to the universal ribosomal protein uL4 family. In terms of assembly, part of the 50S ribosomal subunit.

Its function is as follows. One of the primary rRNA binding proteins, this protein initially binds near the 5'-end of the 23S rRNA. It is important during the early stages of 50S assembly. It makes multiple contacts with different domains of the 23S rRNA in the assembled 50S subunit and ribosome. Forms part of the polypeptide exit tunnel. The sequence is that of Large ribosomal subunit protein uL4 from Bifidobacterium longum (strain DJO10A).